We begin with the raw amino-acid sequence, 374 residues long: Histidinol-phosphate aminotransferase (374 aa).

Position 211 is an N6-(pyridoxal phosphate)lysine (Lys211). Residues Gly351–Asp368 are compositionally biased toward low complexity. The interval Gly351–Asn374 is disordered.

This sequence belongs to the class-II pyridoxal-phosphate-dependent aminotransferase family. Histidinol-phosphate aminotransferase subfamily. In terms of assembly, homodimer. It depends on pyridoxal 5'-phosphate as a cofactor.

The catalysed reaction is L-histidinol phosphate + 2-oxoglutarate = 3-(imidazol-4-yl)-2-oxopropyl phosphate + L-glutamate. Its pathway is amino-acid biosynthesis; L-histidine biosynthesis; L-histidine from 5-phospho-alpha-D-ribose 1-diphosphate: step 7/9. The polypeptide is Histidinol-phosphate aminotransferase (Photobacterium profundum (strain SS9)).